Here is a 136-residue protein sequence, read N- to C-terminus: UPF0299 membrane protein PM0880 (136 aa).

4 helical membrane passes run 5–25 (IVDL…GEWI), 29–49 (LNIG…GLTF), 67–87 (YMAL…DVLF), and 92–112 (VLLL…GLLS).

It belongs to the UPF0299 family.

The protein localises to the cell inner membrane. The polypeptide is UPF0299 membrane protein PM0880 (Pasteurella multocida (strain Pm70)).